Reading from the N-terminus, the 300-residue chain is tRNA pseudouridine synthase B (300 aa).

Catalysis depends on aspartate 44, which acts as the Nucleophile.

It belongs to the pseudouridine synthase TruB family. Type 1 subfamily.

It catalyses the reaction uridine(55) in tRNA = pseudouridine(55) in tRNA. Functionally, responsible for synthesis of pseudouridine from uracil-55 in the psi GC loop of transfer RNAs. The sequence is that of tRNA pseudouridine synthase B from Corynebacterium diphtheriae (strain ATCC 700971 / NCTC 13129 / Biotype gravis).